The chain runs to 417 residues: Lissencephaly-1 homolog (417 aa).

The region spanning 7-39 (QKEELNRAIADYLFANGYVKALNAFREESQLAG) is the LisH domain. The stretch at 54–86 (TSVIRLQKKVMDLEAKLNEAEKEFQSMQNAIGF) forms a coiled coil. WD repeat units follow at residues 120-159 (GHRS…FEHT), 162-203 (GHTD…KTLT), 204-243 (GHDH…CTKT), 246-285 (GHTE…CQVV), 288-340 (GHEH…CLFV), 343-382 (GHDN…CHKT), and 385-417 (AHSH…WDCR).

Belongs to the WD repeat LIS1/nudF family.

The protein localises to the cytoplasm. The protein resides in the cytoskeleton. It localises to the microtubule organizing center. It is found in the centrosome. Its function is as follows. Positively regulates the activity of the minus-end directed microtubule motor protein dynein. May enhance dynein-mediated microtubule sliding by targeting dynein to the microtubule plus end. Required for several dynein- and microtubule-dependent processes. This is Lissencephaly-1 homolog from Schistosoma mansoni (Blood fluke).